We begin with the raw amino-acid sequence, 177 residues long: Inner membrane-spanning protein YciB (177 aa).

5 helical membrane-spanning segments follow: residues 22–42 (IFIA…IHWI), 50–70 (ISLF…FFHN), 76–96 (WKIT…QFFT), 121–141 (FIWS…AYYF), and 149–169 (FKVF…SIYI).

This sequence belongs to the YciB family.

The protein localises to the cell inner membrane. Functionally, plays a role in cell envelope biogenesis, maintenance of cell envelope integrity and membrane homeostasis. The sequence is that of Inner membrane-spanning protein YciB from Buchnera aphidicola subsp. Acyrthosiphon pisum (strain 5A).